Here is an 82-residue protein sequence, read N- to C-terminus: Penaeidin-3i (82 aa).

An N-terminal signal peptide occupies residues 1-19 (MRLVVCLVFLASFALVCQG). At Gln20 the chain carries Pyrrolidone carboxylic acid. Intrachain disulfides connect Cys55–Cys73 and Cys67–Cys74. Residue Ser81 is modified to Serine amide.

It belongs to the penaeidin family.

The protein localises to the cytoplasmic granule. Antibacterial and antifungal activity. Presents chitin-binding activity. The chain is Penaeidin-3i from Penaeus vannamei (Whiteleg shrimp).